A 30-amino-acid chain; its full sequence is Superoxide dismutase [Cu-Zn] 1 (30 aa).

It belongs to the Cu-Zn superoxide dismutase family. Requires Cu cation as cofactor. Zn(2+) serves as cofactor. Expressed in fruits, leaves and pollen grains.

The protein localises to the cytoplasm. Its subcellular location is the endoplasmic reticulum. It catalyses the reaction 2 superoxide + 2 H(+) = H2O2 + O2. With respect to regulation, inhibited by KCN and H(2)O(2). Its function is as follows. Destroys radicals which are normally produced within the cells and which are toxic to biological systems. Probably involved in the protection against oxidative stress during pollen development. In Olea europaea (Common olive), this protein is Superoxide dismutase [Cu-Zn] 1.